Reading from the N-terminus, the 346-residue chain is Holliday junction branch migration complex subunit RuvB (346 aa).

Polar residues predominate over residues methionine 1–alanine 11. The interval methionine 1–alanine 20 is disordered. The segment at methionine 1–tyrosine 183 is large ATPase domain (RuvB-L). ATP is bound by residues isoleucine 22, arginine 23, glycine 64, lysine 67, threonine 68, threonine 69, glutamate 130 to phenylalanine 132, arginine 173, tyrosine 183, and arginine 220. A Mg(2+)-binding site is contributed by threonine 68. The tract at residues serine 184–lysine 254 is small ATPAse domain (RuvB-S). The tract at residues proline 257–phenylalanine 346 is head domain (RuvB-H). Residues arginine 293, arginine 312, and arginine 317 each contribute to the DNA site.

It belongs to the RuvB family. In terms of assembly, homohexamer. Forms an RuvA(8)-RuvB(12)-Holliday junction (HJ) complex. HJ DNA is sandwiched between 2 RuvA tetramers; dsDNA enters through RuvA and exits via RuvB. An RuvB hexamer assembles on each DNA strand where it exits the tetramer. Each RuvB hexamer is contacted by two RuvA subunits (via domain III) on 2 adjacent RuvB subunits; this complex drives branch migration. In the full resolvosome a probable DNA-RuvA(4)-RuvB(12)-RuvC(2) complex forms which resolves the HJ.

It is found in the cytoplasm. The enzyme catalyses ATP + H2O = ADP + phosphate + H(+). Functionally, the RuvA-RuvB-RuvC complex processes Holliday junction (HJ) DNA during genetic recombination and DNA repair, while the RuvA-RuvB complex plays an important role in the rescue of blocked DNA replication forks via replication fork reversal (RFR). RuvA specifically binds to HJ cruciform DNA, conferring on it an open structure. The RuvB hexamer acts as an ATP-dependent pump, pulling dsDNA into and through the RuvAB complex. RuvB forms 2 homohexamers on either side of HJ DNA bound by 1 or 2 RuvA tetramers; 4 subunits per hexamer contact DNA at a time. Coordinated motions by a converter formed by DNA-disengaged RuvB subunits stimulates ATP hydrolysis and nucleotide exchange. Immobilization of the converter enables RuvB to convert the ATP-contained energy into a lever motion, pulling 2 nucleotides of DNA out of the RuvA tetramer per ATP hydrolyzed, thus driving DNA branch migration. The RuvB motors rotate together with the DNA substrate, which together with the progressing nucleotide cycle form the mechanistic basis for DNA recombination by continuous HJ branch migration. Branch migration allows RuvC to scan DNA until it finds its consensus sequence, where it cleaves and resolves cruciform DNA. The protein is Holliday junction branch migration complex subunit RuvB of Xanthomonas campestris pv. campestris (strain 8004).